Reading from the N-terminus, the 137-residue chain is Large ribosomal subunit protein uL16 (137 aa).

The segment at 1–20 is disordered; the sequence is MLQPSNRKYRKDFKGRNRGV. A compositionally biased stretch (basic residues) spans 7–17; the sequence is RKYRKDFKGRN.

Belongs to the universal ribosomal protein uL16 family. Part of the 50S ribosomal subunit.

Functionally, binds 23S rRNA and is also seen to make contacts with the A and possibly P site tRNAs. The sequence is that of Large ribosomal subunit protein uL16 from Coxiella burnetii (strain CbuG_Q212) (Coxiella burnetii (strain Q212)).